The primary structure comprises 297 residues: Palmitoyl-protein thioesterase ABHD10, mitochondrial (297 aa).

The N-terminal 43 residues, M1–K43, are a transit peptide targeting the mitochondrion. Positions I69 to P181 constitute an AB hydrolase-1 domain. Active-site charge relay system residues include S143, D240, and H270.

Belongs to the AB hydrolase superfamily. As to expression, expressed in epididymal sperm but not in testicular sperm (at protein level).

The protein resides in the mitochondrion. The catalysed reaction is S-hexadecanoyl-L-cysteinyl-[protein] + H2O = L-cysteinyl-[protein] + hexadecanoate + H(+). It catalyses the reaction mycophenolic acid O-acyl-beta-D-glucuronide + H2O = mycophenolate + D-glucuronate + H(+). With respect to regulation, inhibited by palmostatin-B. In terms of biological role, acts as an acyl-protein thioesterase that hydrolyzes fatty acids from acylated residues in proteins. Regulates the mitochondrial S-depalmitoylation of the nucleophilic active site residue of peroxiredoxin-5/PRDX5, a key antioxidant protein, therefore modulating mitochondrial antioxidant ability. Also catalyzes the deglucuronidation of mycophenolic acid acyl-glucuronide, an active metabolite of the immunosuppressant drug mycophenolate. This Rattus norvegicus (Rat) protein is Palmitoyl-protein thioesterase ABHD10, mitochondrial.